Here is a 252-residue protein sequence, read N- to C-terminus: DNA-directed RNA polymerase III subunit rpc8 (252 aa).

The segment at 214 to 252 (WTNQSAGDDDENEEDGGENQDDEVAEDDGGEEPTIEEDE) is disordered. Residues 220 to 252 (GDDDENEEDGGENQDDEVAEDDGGEEPTIEEDE) are compositionally biased toward acidic residues.

It belongs to the eukaryotic RPB7/RPC8 RNA polymerase subunit family. In terms of assembly, component of the RNA polymerase III (Pol III) complex consisting of several subunits.

Its subcellular location is the nucleus. DNA-dependent RNA polymerase catalyzes the transcription of DNA into RNA using the four ribonucleoside triphosphates as substrates. The sequence is that of DNA-directed RNA polymerase III subunit rpc8 (polr3h-1) from Dictyostelium discoideum (Social amoeba).